Consider the following 65-residue polypeptide: MFLSAVTFAKSKSKTILVKMVSQAGTGFSFNTKRSRLWEKLTLLHYDPVVKKKVLFVEQKKIRSL.

Residues 1–8 (MFLSAVTF) constitute a mitochondrion transit peptide.

The protein belongs to the bacterial ribosomal protein bL33 family. As to quaternary structure, component of the mitochondrial ribosome large subunit (39S) which comprises a 16S rRNA and about 50 distinct proteins.

The protein localises to the mitochondrion. This Bos taurus (Bovine) protein is Large ribosomal subunit protein bL33m (MRPL33).